The following is a 196-amino-acid chain: Probable malonic semialdehyde reductase RutE (196 aa).

It belongs to the nitroreductase family. HadB/RutE subfamily. The cofactor is FMN.

It catalyses the reaction 3-hydroxypropanoate + NADP(+) = 3-oxopropanoate + NADPH + H(+). May reduce toxic product malonic semialdehyde to 3-hydroxypropionic acid, which is excreted. In Escherichia coli O7:K1 (strain IAI39 / ExPEC), this protein is Probable malonic semialdehyde reductase RutE.